A 382-amino-acid polypeptide reads, in one-letter code: Anhydro-N-acetylmuramic acid kinase (382 aa).

Position 18–25 (18–25) interacts with ATP; the sequence is GTSLDGVD.

This sequence belongs to the anhydro-N-acetylmuramic acid kinase family.

The catalysed reaction is 1,6-anhydro-N-acetyl-beta-muramate + ATP + H2O = N-acetyl-D-muramate 6-phosphate + ADP + H(+). It participates in amino-sugar metabolism; 1,6-anhydro-N-acetylmuramate degradation. Its pathway is cell wall biogenesis; peptidoglycan recycling. Its function is as follows. Catalyzes the specific phosphorylation of 1,6-anhydro-N-acetylmuramic acid (anhMurNAc) with the simultaneous cleavage of the 1,6-anhydro ring, generating MurNAc-6-P. Is required for the utilization of anhMurNAc either imported from the medium or derived from its own cell wall murein, and thus plays a role in cell wall recycling. The protein is Anhydro-N-acetylmuramic acid kinase of Ralstonia nicotianae (strain ATCC BAA-1114 / GMI1000) (Ralstonia solanacearum).